The chain runs to 35 residues: GGSVDSAAAEEVFESNCASCHGADLSGAGPDLTQV.

Residues C17, C20, and H21 each contribute to the heme c site.

In terms of processing, binds 1 heme c group covalently per subunit.

Monoheme cytochrome which functions as an electron carrier in the reduction of nitrite by membrane vesicles. This Virgibacillus halodenitrificans (Bacillus halodenitrificans) protein is Cytochrome c-550.